We begin with the raw amino-acid sequence, 84 residues long: RNA-binding protein Hfq (84 aa).

The 61-residue stretch at 11–71 (DTFLNFVRKN…ISTIMPGAPI (61 aa)) folds into the Sm domain.

It belongs to the Hfq family. Homohexamer.

Functionally, RNA chaperone that binds small regulatory RNA (sRNAs) and mRNAs to facilitate mRNA translational regulation in response to envelope stress, environmental stress and changes in metabolite concentrations. Also binds with high specificity to tRNAs. The sequence is that of RNA-binding protein Hfq from Beijerinckia indica subsp. indica (strain ATCC 9039 / DSM 1715 / NCIMB 8712).